The following is a 3122-amino-acid chain: tRNA nuclease CdiA-2 (3122 aa).

The segment at 36–205 is two-partner system transport domain (TPS); sequence RAGVVPAWLS…ATLTTGNPNF (170 aa). A helical membrane pass occupies residues 54-74; the sequence is VALAVLVAAGVVPIWVNAQVV. Residues 256–1254 form an FHA-1 region; that stretch reads VVAGSNQVDY…GGSVAIQASG (999 aa). The tract at residues 492–512 is disordered; sequence GMTLGGGSLSNQGGRANSQGP. Residues 500–512 are compositionally biased toward polar residues; that stretch reads LSNQGGRANSQGP. A receptor binding domain (RBD) region spans residues 1345–1635; it reads TRRVMQTSGN…SATAVNVLSN (291 aa). Positions 1790–1845 are periplasmic FHA-1 repeat (pFR); that stretch reads TAGNIDLKNTQVFTNSGTVKADTTLALQGKQIDNAFGALQSGGLTSLDTTGNVDLT. Residues 1947–2085 form an FHA-2 region; that stretch reads SDTDLNSATG…TERHVYNSRE (139 aa). 3 disordered regions span residues 2002–2031, 2151–2174, and 2325–2352; these read TSTINANSSGDQGNRSYAETRHGSDQALTG, TTSQDTSQSSTTYQEQHSGLMSGG, and IGVQVSVGSSHSSMQSSEDQTIQRGSSI. The interval 2086–2825 is pretoxin (PT) domain; that stretch reads THSRSGVVSG…SAGAAMASNV (740 aa). 2 stretches are compositionally biased toward low complexity: residues 2151-2170 and 2325-2341; these read TTSQDTSQSSTTYQEQHSGL and IGVQVSVGSSHSSMQSS. A compositionally biased stretch (polar residues) spans 2342–2352; sequence EDQTIQRGSSI. Residues 2821–3122 form a C-terminal effector domain (CT), has tRNA nuclease activity region; it reads MASNVELYNA…NITIIKPKGN (302 aa). The ELYN C-terminal motif motif lies at 2826–2829; the sequence is ELYN. Residues 2948–3000 form a disordered region; sequence GATDRTPPSNAILSNSNSDNNSTQGSQSGTVTKTPNPEATGSLSGKPTQIPPL. Residues 2948–3122 are truncated CT domain, has tRNA nuclease activity, sufficient for interaction with CdiI-2; it reads GATDRTPPSN…NITIIKPKGN (175 aa). The span at 2953–2994 shows a compositional bias: polar residues; that stretch reads TPPSNAILSNSNSDNNSTQGSQSGTVTKTPNPEATGSLSGKP. Residues 2987-3122 form a has tRNase activity region; the sequence is TGSLSGKPTQ…NITIIKPKGN (136 aa). Catalysis depends on residues E3012, D3039, D3048, and K3067.

The protein in the N-terminal section; belongs to the CdiA toxin family. In terms of assembly, interacts with cognate immunity protein CdiI, which blocks its tRNA nuclease activity. The truncated CT fragment (residues 2948-3122) specifically interacts with cognate CdiI which inhibits the tRNA nuclease activity. The truncated CT is more stable in vitro than the original CT fragment characterized in E.coli.

It is found in the membrane. The protein localises to the secreted. Its subcellular location is the target cell. The protein resides in the target cell cytoplasm. Functionally, toxic component of a toxin-immunity protein module, which functions as a cellular contact-dependent growth inhibition (CDI) system. CDI modules allow bacteria to communicate with and inhibit the growth of closely related neighboring bacteria in a contact-dependent fashion. The C-terminal 301 residues (the CT fragment) cleaves near the C-terminus of E.coli tRNA1B(Ala), probably preventing tRNA charging, and inhibits growth in E.coli. A truncated CT fragment (residues 2948-3122) has tRNA endonuclease activity on several B.thailandensis tRNAs as well as tRNA2(Arg) where it cleaves after A-70 and U-71. Inactive CT domain binds tRNA, probably in a 1:1 complex. Toxic activity is neutralized by coexpression of the cognate immunity protein CdiI in E.coli, but not by non-cognate immunity proteins from other strains of B.pseudomallei. May use lipopolysaccharide as its target cell receptor. Probably gains access to the cytoplasm of target cells (B.thailandensis strain E264) by using integral inner membrane protein BTH_II0599. Protein BTH_I0359 is also implicated in an unknown fashion in CDI in B.thailandensis strain E264. Its function is as follows. Expression of this cdiAIB locus in B.thailandensis confers protection against other bacteria carrying the locus; growth inhibition requires cellular contact. The CdiA protein is thought to be exported from the cell through the central lumen of CdiB, the other half of its two-partner system (TPS). The TPS domain probably remains associated with CdiB while the FHA-1 domain forms an extended filament with the receptor-binding domain (RBD) at its extremity; in the secretion arrested state the C-terminus of the RBD domain form a hairpin-like structure as the FHA-2, PT and CT domains are periplasmic. Upon binding to a target cell outer membrane receptor (possibly a lipoprotein in this CDI) a signal is transmitted to activate secretion. The filament elongates slightly, the rest of CdiA is secreted and the FHA-2 domain becomes stably associated with the target cell's outer membrane where it facilitates entry of the toxic CT domain into the target cell periplasm. From there the toxic CT domain is cleaved and gains access to the target cell cytoplasm via an inner membrane protein (probably inner membrane protein BTH_II0599). This Burkholderia pseudomallei (strain 1026b) protein is tRNA nuclease CdiA-2 (cdiA2).